We begin with the raw amino-acid sequence, 524 residues long: Protein tweety homolog 3 (524 aa).

Topologically, residues 1–42 (MAGVSYAAPWWVSLLHRLPHFDLRWEATSSQFRPEDADYQQA) are extracellular. A helical transmembrane segment spans residues 43–63 (LLLLGATALACLALDLLFLLF). The Cytoplasmic portion of the chain corresponds to 64-86 (YSFWLCCRRRKTDEHLDADCCCT). The helical transmembrane segment at 87–107 (AWCVIITTLVCSAGIAVGFYG) threads the bilayer. The Extracellular segment spans residues 108–211 (NGETSDGIHR…VDLYDWYRWL (104 aa)). 2 residues coordinate Ca(2+): glutamate 110 and aspartate 113. Residues asparagine 126 and asparagine 144 are each glycosylated (N-linked (GlcNAc...) asparagine). A helical membrane pass occupies residues 212 to 232 (GYLGLLLLDVIICLLVLVGLI). Residues 233 to 236 (RSSK) lie on the Cytoplasmic side of the membrane. The helical transmembrane segment at 237–257 (GILVGVCLLGVLALVISWGAL) threads the bilayer. Residues 258-386 (GLELAVSVGS…LTGFCYDGVE (129 aa)) lie on the Extracellular side of the membrane. 2 cysteine pairs are disulfide-bonded: cysteine 271-cysteine 381 and cysteine 299-cysteine 366. The N-linked (GlcNAc...) asparagine glycan is linked to asparagine 351. A helical membrane pass occupies residues 387-407 (GLIYLALFSFVTALMFSSIVC). The Cytoplasmic portion of the chain corresponds to 408 to 524 (SIPHTWQQKR…PRPDSSGSGH (117 aa)). 2 disordered regions span residues 413 to 435 (WQQKRGPDDDGEEETAPGPRQAH) and 485 to 524 (RCENTPLIGRESPPPSYTSSMRAKYLATSQPRPDSSGSGH). A Phosphoserine modification is found at serine 496. The PY-motif; mediates interaction with NEDD4L signature appears at 498-501 (PPSY). Residues 501 to 524 (YTSSMRAKYLATSQPRPDSSGSGH) show a composition bias toward polar residues. Residues serine 504 and serine 522 each carry the phosphoserine modification.

This sequence belongs to the tweety family. In terms of assembly, homotetramer; disulfide-linked. Forms cis-homodimers in the presence of Ca(2+). Interacts with NEDD4L. Ubiquitinated by NEDD4L. Post-translationally, N-glycosylated. As to expression, expressed in excitable tissues. Expressed in the brain, heart, skeletal muscle, colon, spleen, kidney and peripheral blood leukocytes. Also expressed in fat, the pancreas, thymus, and uterus.

The protein resides in the cell membrane. It catalyses the reaction chloride(in) = chloride(out). The catalysed reaction is L-glutamate(out) = L-glutamate(in). Its activity is regulated as follows. Inhibited by (4-[(2-butyl-6,7-dichloro-2- cyclopentyl-2,3-dihydro-1-oxo-1H-inden-5-yl)oxy]butanoic acid), genistein and PD98059 (MEK1 inhibitor). Its function is as follows. Calcium-independent, swelling-dependent volume-regulated anion channel (VRAC-swell) which plays a pivotal role in the process of regulatory volume decrease (RVD) in the brain through the efflux of anions like chloride and organic osmolytes like glutamate. Probable large-conductance Ca(2+)-activated chloride channel. The sequence is that of Protein tweety homolog 3 (Ttyh3) from Mus musculus (Mouse).